Reading from the N-terminus, the 283-residue chain is Mitochondrial outer membrane protein porin (283 aa).

The protein belongs to the eukaryotic mitochondrial porin family.

The protein resides in the mitochondrion outer membrane. Forms a channel through the cell membrane that allows diffusion of small hydrophilic molecules. The channel adopts an open conformation at low or zero membrane potential and a closed conformation at potentials above 30-40 mV. The open state has a weak anion selectivity whereas the closed state is cation-selective. The chain is Mitochondrial outer membrane protein porin from Neurospora crassa (strain ATCC 24698 / 74-OR23-1A / CBS 708.71 / DSM 1257 / FGSC 987).